Here is a 492-residue protein sequence, read N- to C-terminus: Glycosyltransferase alg8 (492 aa).

Helical transmembrane passes span 13–32 (GWLLFLSFLMLVAVALPPQV), 47–69 (IGVWRYSMGIIHFLRGMLFLYVV), 379–401 (LTVAIIGSIKYSIAIFIAYLLWV), and 421–443 (PAYPLILYYNQIVGAVVKIHVFF).

It belongs to the glycosyltransferase 2 family.

The protein localises to the cell membrane. Its pathway is glycan biosynthesis; alginate biosynthesis. Its function is as follows. Possibly a processive enzyme that polymerizes GDP-mannuronic acid. The polypeptide is Glycosyltransferase alg8 (alg8) (Azotobacter vinelandii).